A 78-amino-acid polypeptide reads, in one-letter code: Delta-conotoxin-like TxMKLT1-0111 (78 aa).

Residues 1-22 (MKLTCMMIVAVLFLTAWTFATA) form the signal peptide. A propeptide spanning residues 23 to 49 (DDSGNGLENLFSNAHHQMKNPEASKLN) is cleaved from the precursor. 3 disulfide bridges follow: Cys53/Cys68, Cys60/Cys72, and Cys67/Cys77.

Belongs to the conotoxin O1 superfamily. Expressed by the venom duct.

It localises to the secreted. Delta-conotoxins bind to site 6 of voltage-gated sodium channels (Nav) and inhibit the inactivation process. This is Delta-conotoxin-like TxMKLT1-0111 from Conus textile (Cloth-of-gold cone).